Consider the following 241-residue polypeptide: Small ribosomal subunit protein uS2 (241 aa).

It belongs to the universal ribosomal protein uS2 family.

This is Small ribosomal subunit protein uS2 from Sodalis glossinidius (strain morsitans).